Reading from the N-terminus, the 190-residue chain is ADP-ribosylation factor-like protein 6 (190 aa).

Gly2 is lipidated: N-myristoyl glycine. GTP-binding positions include 24-31 (GLDNSGKT), Thr50, 69-73 (DMAGQ), Gly72, 130-133 (NKMD), and Ala164. Residues Thr31 and Thr50 each coordinate Mg(2+).

This sequence belongs to the small GTPase superfamily. Arf family.

Its subcellular location is the cytoplasm. The sequence is that of ADP-ribosylation factor-like protein 6 from Caenorhabditis briggsae.